The primary structure comprises 445 residues: Chromosome partition protein MukF (445 aa).

The segment at Leu-213 to Ile-241 is leucine-zipper.

It belongs to the MukF family. Interacts, and probably forms a ternary complex, with MukE and MukB via its C-terminal region. The complex formation is stimulated by calcium or magnesium. It is required for an interaction between MukE and MukB.

It localises to the cytoplasm. Its subcellular location is the nucleoid. Functionally, involved in chromosome condensation, segregation and cell cycle progression. May participate in facilitating chromosome segregation by condensation DNA from both sides of a centrally located replisome during cell division. Not required for mini-F plasmid partitioning. Probably acts via its interaction with MukB and MukE. Overexpression results in anucleate cells. It has a calcium binding activity. The sequence is that of Chromosome partition protein MukF from Vibrio cholerae serotype O1 (strain ATCC 39315 / El Tor Inaba N16961).